Consider the following 227-residue polypeptide: Cytochrome c oxidase subunit 2 (227 aa).

Residues 1–14 (MAYPFQLGLXDATS) are Mitochondrial intermembrane-facing. Residues 15 to 45 (PIMEELLHFHDHTLMIVFLISSLVLYIITLM) form a helical membrane-spanning segment. Topologically, residues 46–59 (LTTKLTHTSTMDAQ) are mitochondrial matrix. Residues 60–87 (EVETVWTILPAIILILIALPSLRILYMM) traverse the membrane as a helical segment. Residues 88–227 (DEINNPSLTV…YFETWSAVMV (140 aa)) lie on the Mitochondrial intermembrane side of the membrane. Cu cation is bound by residues His161, Cys196, Glu198, Cys200, His204, and Met207. Residue Glu198 participates in Mg(2+) binding.

The protein belongs to the cytochrome c oxidase subunit 2 family. As to quaternary structure, component of the cytochrome c oxidase (complex IV, CIV), a multisubunit enzyme composed of 14 subunits. The complex is composed of a catalytic core of 3 subunits MT-CO1, MT-CO2 and MT-CO3, encoded in the mitochondrial DNA, and 11 supernumerary subunits COX4I, COX5A, COX5B, COX6A, COX6B, COX6C, COX7A, COX7B, COX7C, COX8 and NDUFA4, which are encoded in the nuclear genome. The complex exists as a monomer or a dimer and forms supercomplexes (SCs) in the inner mitochondrial membrane with NADH-ubiquinone oxidoreductase (complex I, CI) and ubiquinol-cytochrome c oxidoreductase (cytochrome b-c1 complex, complex III, CIII), resulting in different assemblies (supercomplex SCI(1)III(2)IV(1) and megacomplex MCI(2)III(2)IV(2)). Found in a complex with TMEM177, COA6, COX18, COX20, SCO1 and SCO2. Interacts with TMEM177 in a COX20-dependent manner. Interacts with COX20. Interacts with COX16. It depends on Cu cation as a cofactor.

Its subcellular location is the mitochondrion inner membrane. It catalyses the reaction 4 Fe(II)-[cytochrome c] + O2 + 8 H(+)(in) = 4 Fe(III)-[cytochrome c] + 2 H2O + 4 H(+)(out). Functionally, component of the cytochrome c oxidase, the last enzyme in the mitochondrial electron transport chain which drives oxidative phosphorylation. The respiratory chain contains 3 multisubunit complexes succinate dehydrogenase (complex II, CII), ubiquinol-cytochrome c oxidoreductase (cytochrome b-c1 complex, complex III, CIII) and cytochrome c oxidase (complex IV, CIV), that cooperate to transfer electrons derived from NADH and succinate to molecular oxygen, creating an electrochemical gradient over the inner membrane that drives transmembrane transport and the ATP synthase. Cytochrome c oxidase is the component of the respiratory chain that catalyzes the reduction of oxygen to water. Electrons originating from reduced cytochrome c in the intermembrane space (IMS) are transferred via the dinuclear copper A center (CU(A)) of subunit 2 and heme A of subunit 1 to the active site in subunit 1, a binuclear center (BNC) formed by heme A3 and copper B (CU(B)). The BNC reduces molecular oxygen to 2 water molecules using 4 electrons from cytochrome c in the IMS and 4 protons from the mitochondrial matrix. This Vulpes corsac (Corsac fox) protein is Cytochrome c oxidase subunit 2 (MT-CO2).